A 310-amino-acid chain; its full sequence is Uridine phosphorylase 1 (310 aa).

Phosphate contacts are provided by residues Gly-60, Arg-94, and 138 to 141 (RIGT). Residues 142–143 (SG) and 217–219 (QGR) each bind uridine.

The protein belongs to the PNP/UDP phosphorylase family. As to quaternary structure, homodimer.

The enzyme catalyses uridine + phosphate = alpha-D-ribose 1-phosphate + uracil. It catalyses the reaction 2'-deoxyuridine + phosphate = 2-deoxy-alpha-D-ribose 1-phosphate + uracil. The protein operates within pyrimidine metabolism; UMP biosynthesis via salvage pathway; uracil from uridine (phosphorylase route): step 1/1. In terms of biological role, catalyzes the reversible phosphorylytic cleavage of uridine to uracil and ribose-1-phosphate which can then be utilized as carbon and energy sources or in the rescue of pyrimidine bases for nucleotide synthesis. Shows broad substrate specificity and can also accept deoxyuridine and other analogous compounds. This chain is Uridine phosphorylase 1, found in Homo sapiens (Human).